Reading from the N-terminus, the 525-residue chain is GMP synthase [glutamine-hydrolyzing] (525 aa).

Residues 8–207 (KILILDFGSQ…ALDICGCAAN (200 aa)) enclose the Glutamine amidotransferase type-1 domain. The Nucleophile role is filled by Cys-85. Residues His-181 and Glu-183 contribute to the active site. Residues 208 to 400 (WKPSSIIEDA…LGLPYNMLYR (193 aa)) form the GMPS ATP-PPase domain. An ATP-binding site is contributed by 235 to 241 (SGGVDSS).

As to quaternary structure, homodimer.

The enzyme catalyses XMP + L-glutamine + ATP + H2O = GMP + L-glutamate + AMP + diphosphate + 2 H(+). Its pathway is purine metabolism; GMP biosynthesis; GMP from XMP (L-Gln route): step 1/1. Catalyzes the synthesis of GMP from XMP. This chain is GMP synthase [glutamine-hydrolyzing], found in Shewanella sp. (strain MR-7).